Consider the following 352-residue polypeptide: C5a anaphylatoxin chemotactic receptor 1 (352 aa).

The Extracellular segment spans residues 1-38; that stretch reads MASMNFSPPEYPDYGTATLDPNIFVDESLNTPKLSVPD. Sulfotyrosine occurs at positions 11 and 14. A helical transmembrane segment spans residues 39 to 65; that stretch reads MIALVIFVMVFLVGVPGNFLVVWVTGF. Over 66 to 70 the chain is Cytoplasmic; that stretch reads EVRRT. The chain crosses the membrane as a helical span at residues 71-94; that stretch reads INAIWFLNLAVADLLSCLALPILF. At 95–111 the chain is on the extracellular side; the sequence is SSIVQQGYWPFGNAACR. Cys110 and Cys189 are disulfide-bonded. Residues 112-133 traverse the membrane as a helical segment; sequence ILPSLILLNMYASILLLTTISA. The Cytoplasmic segment spans residues 134 to 154; the sequence is DRFVLVFNPIWCQNYRGPQLA. A helical transmembrane segment spans residues 155–175; that stretch reads WAACSVAWAVALLLTVPSFIF. Topologically, residues 176–202 are extracellular; that stretch reads RGVHTEYFPFWMTCGVDYSGVGVLVER. The helical transmembrane segment at 203 to 228 threads the bilayer; that stretch reads GVAILRLLMGFLGPLVILSICYTFLL. Residues 229-244 are Cytoplasmic-facing; it reads IRTWSRKATRSTKTLK. The chain crosses the membrane as a helical span at residues 245-267; it reads VVVAVVVSFFVLWLPYQVTGMMM. Over 268 to 284 the chain is Extracellular; that stretch reads ALFYKHSESFRRVSRLD. The chain crosses the membrane as a helical span at residues 285–305; that stretch reads SLCVAVAYINCCINPIIYVLA. Topologically, residues 306–352 are cytoplasmic; that stretch reads AQGFHSRFLKSLPARLRQVLAEESVGRDSKSITLSTVDTPAQKSQGV. A phosphoserine mark is found at Ser316, Ser329, Ser334, Ser336, and Ser340.

This sequence belongs to the G-protein coupled receptor 1 family. In terms of assembly, homodimer. May also form higher-order oligomers. Interacts (when phosphorylated) with ARRB1 and ARRB2; the interaction is associated with internalization of C5aR. Sulfation plays a critical role in the association of C5aR with C5a, but no significant role in the ability of the receptor to transduce a signal and mobilize calcium in response to a small peptide agonist. In terms of processing, phosphorylated on serine residues in response to C5a binding, resulting in internalization of the receptor and short-term desensitization to C5a.

The protein resides in the cell membrane. It localises to the cytoplasmic vesicle. Its function is as follows. Receptor for the chemotactic and inflammatory peptide anaphylatoxin C5a. The ligand interacts with at least two sites on the receptor: a high-affinity site on the extracellular N-terminus, and a second site in the transmembrane region which activates downstream signaling events. Receptor activation stimulates chemotaxis, granule enzyme release, intracellular calcium release and superoxide anion production. The polypeptide is C5a anaphylatoxin chemotactic receptor 1 (C5AR1) (Canis lupus familiaris (Dog)).